We begin with the raw amino-acid sequence, 524 residues long: GMP synthase [glutamine-hydrolyzing] (524 aa).

The region spanning 8–206 (RILILDFGSQ…IYDICGCEAL (199 aa)) is the Glutamine amidotransferase type-1 domain. Residue cysteine 85 is the Nucleophile of the active site. Catalysis depends on residues histidine 180 and glutamate 182. One can recognise a GMPS ATP-PPase domain in the interval 207-399 (WEPRHIIAKS…LGLPFELVYR (193 aa)). Position 234–240 (234–240 (SGGVDSS)) interacts with ATP.

As to quaternary structure, homodimer.

It carries out the reaction XMP + L-glutamine + ATP + H2O = GMP + L-glutamate + AMP + diphosphate + 2 H(+). It functions in the pathway purine metabolism; GMP biosynthesis; GMP from XMP (L-Gln route): step 1/1. In terms of biological role, catalyzes the synthesis of GMP from XMP. This chain is GMP synthase [glutamine-hydrolyzing], found in Nitrosococcus oceani (strain ATCC 19707 / BCRC 17464 / JCM 30415 / NCIMB 11848 / C-107).